The chain runs to 94 residues: Putative pterin-4-alpha-carbinolamine dehydratase (94 aa).

The protein belongs to the pterin-4-alpha-carbinolamine dehydratase family.

It catalyses the reaction (4aS,6R)-4a-hydroxy-L-erythro-5,6,7,8-tetrahydrobiopterin = (6R)-L-erythro-6,7-dihydrobiopterin + H2O. In Mycobacterium sp. (strain JLS), this protein is Putative pterin-4-alpha-carbinolamine dehydratase.